The sequence spans 99 residues: Aspartyl/glutamyl-tRNA(Asn/Gln) amidotransferase subunit C (99 aa).

It belongs to the GatC family. As to quaternary structure, heterotrimer of A, B and C subunits.

The catalysed reaction is L-glutamyl-tRNA(Gln) + L-glutamine + ATP + H2O = L-glutaminyl-tRNA(Gln) + L-glutamate + ADP + phosphate + H(+). It carries out the reaction L-aspartyl-tRNA(Asn) + L-glutamine + ATP + H2O = L-asparaginyl-tRNA(Asn) + L-glutamate + ADP + phosphate + 2 H(+). In terms of biological role, allows the formation of correctly charged Asn-tRNA(Asn) or Gln-tRNA(Gln) through the transamidation of misacylated Asp-tRNA(Asn) or Glu-tRNA(Gln) in organisms which lack either or both of asparaginyl-tRNA or glutaminyl-tRNA synthetases. The reaction takes place in the presence of glutamine and ATP through an activated phospho-Asp-tRNA(Asn) or phospho-Glu-tRNA(Gln). The sequence is that of Aspartyl/glutamyl-tRNA(Asn/Gln) amidotransferase subunit C from Variovorax paradoxus (strain S110).